Consider the following 300-residue polypeptide: C-5 sterol desaturase (300 aa).

4 consecutive transmembrane segments (helical) span residues 3-23 (DPVL…WTAA), 68-88 (SLAL…QLSA), 91-111 (WYTW…YHRI), and 147-167 (ILMW…FCSW). In terms of domain architecture, Fatty acid hydroxylase spans 94–227 (WVIAIVGVDL…LIIWDRLFGS (134 aa)).

It belongs to the sterol desaturase family.

It localises to the cell membrane. The chain is C-5 sterol desaturase (erg3) from Mycobacterium bovis (strain ATCC BAA-935 / AF2122/97).